A 1706-amino-acid polypeptide reads, in one-letter code: Brefeldin A-inhibited guanine nucleotide-exchange protein 4 (1706 aa).

The SEC7 domain maps to 555 to 742 (MLEQRRAYKI…GSLYDRVVKE (188 aa)). The active site involves Glu657.

As to quaternary structure, homodimer.

The protein resides in the cytoplasm. The protein localises to the cytosol. It is found in the membrane. With respect to regulation, inhibited by brefeldin A. Activates the ARF proteins by exchanging bound GDP for free GTP. Plays a role in vesicular protein sorting. This chain is Brefeldin A-inhibited guanine nucleotide-exchange protein 4 (BIG4), found in Arabidopsis thaliana (Mouse-ear cress).